The sequence spans 259 residues: Src-like-adapter 2 (259 aa).

Residues 1–20 (MGSLSSRGKTSSPSPSSSGP) are compositionally biased toward low complexity. The segment at 1–30 (MGSLSSRGKTSSPSPSSSGPDQEPVSMQPE) is disordered. Glycine 2 carries the N-myristoyl glycine lipid modification. The SH3 domain maps to 31-91 (RHKVTAVALG…PSVYVAKVAH (61 aa)). The region spanning 93–190 (WLYEGLSREK…GICCPLREPC (98 aa)) is the SH2 domain. Positions 190-259 (CVLQKLGPLP…SLAEDPLDDA (70 aa)) are SLA C-terminal.

As to quaternary structure, interacts (via its C-terminal domain) with CBL (phosphorylated). Interacts (via SH2 domain) with ZAP70 (phosphorylated) and CD3Z (phosphorylated). Interacts (via SH2 domain) with CSF1R (phosphorylated). Post-translationally, phosphorylated by CSF1R. Mainly expressed in immune system. Highly expressed in spleen and thymus and expressed at intermediate levels in lung. Not expressed in liver, heart and brain. Isoform 1 is predominant in lung and spleen, while isoform 2 is predominant in thymus.

It localises to the cytoplasm. The protein resides in the cell membrane. It is found in the cytoplasmic vesicle. The protein localises to the late endosome. Functionally, adapter protein, which negatively regulates T-cell receptor (TCR) signaling. Inhibits T-cell antigen-receptor induced activation of nuclear factor of activated T-cells. May act by linking signaling proteins such as ZAP70 with CBL, leading to a CBL dependent degradation of signaling proteins. This is Src-like-adapter 2 (Sla2) from Mus musculus (Mouse).